A 163-amino-acid polypeptide reads, in one-letter code: MHTRAIYPGTFDPITNGHADLIERAAKLFKHVVIGIAANPSKQPRFTLEERVELVNRVTAHLDNVEVVGFSGLLVDFAKEQKASVLVRGLRAVSDFEYEFQLANMNRRLSPDLESVFLTPAEENSFISSTLVKEVALHGGDVNQFVHSEVATALAAKLKLAKP.

Thr-10 provides a ligand contact to substrate. ATP contacts are provided by residues 10–11 and His-18; that span reads TF. The substrate site is built by Lys-42, Leu-74, and Arg-88. Residues 89 to 91, Glu-99, and 124 to 130 each bind ATP; these read GLR and NSFISST.

This sequence belongs to the bacterial CoaD family. In terms of assembly, homohexamer. Requires Mg(2+) as cofactor.

The protein resides in the cytoplasm. It catalyses the reaction (R)-4'-phosphopantetheine + ATP + H(+) = 3'-dephospho-CoA + diphosphate. Its pathway is cofactor biosynthesis; coenzyme A biosynthesis; CoA from (R)-pantothenate: step 4/5. In terms of biological role, reversibly transfers an adenylyl group from ATP to 4'-phosphopantetheine, yielding dephospho-CoA (dPCoA) and pyrophosphate. The sequence is that of Phosphopantetheine adenylyltransferase from Shewanella baltica (strain OS155 / ATCC BAA-1091).